The following is a 263-amino-acid chain: Hydroxyethylthiazole kinase 2 (263 aa).

Met42 is a substrate binding site. Residues Lys118 and Thr164 each contribute to the ATP site. Residue Gly191 coordinates substrate.

Belongs to the Thz kinase family. It depends on Mg(2+) as a cofactor.

The enzyme catalyses 5-(2-hydroxyethyl)-4-methylthiazole + ATP = 4-methyl-5-(2-phosphooxyethyl)-thiazole + ADP + H(+). The protein operates within cofactor biosynthesis; thiamine diphosphate biosynthesis; 4-methyl-5-(2-phosphoethyl)-thiazole from 5-(2-hydroxyethyl)-4-methylthiazole: step 1/1. Functionally, catalyzes the phosphorylation of the hydroxyl group of 4-methyl-5-beta-hydroxyethylthiazole (THZ). This Clostridium botulinum (strain Loch Maree / Type A3) protein is Hydroxyethylthiazole kinase 2.